The sequence spans 690 residues: Proprotein convertase subtilisin/kexin type 9 (690 aa).

A signal peptide spans Met-1–Ala-28. Residues Gln-29–Gln-150 constitute a propeptide that is removed on maturation. At Tyr-36 the chain carries Sulfotyrosine. Phosphoserine is present on Ser-45. One can recognise an Inhibitor I9 domain in the interval Thr-75–Val-147. A Peptidase S8 domain is found at Pro-153–Trp-459. Active-site charge relay system residues include Asp-184 and His-224. 2 disulfide bridges follow: Cys-221–Cys-253 and Cys-321–Cys-356. Ser-384 functions as the Charge relay system in the catalytic mechanism. The tract at residues Gly-448–Gln-690 is C-terminal domain. Disulfide bonds link Cys-455/Cys-525, Cys-475/Cys-524, and Cys-484/Cys-507. Residue Asn-531 is glycosylated (N-linked (GlcNAc...) asparagine). Cystine bridges form between Cys-532-Cys-599, Cys-550-Cys-598, Cys-560-Cys-586, Cys-606-Cys-677, Cys-624-Cys-676, and Cys-633-Cys-652. Residue Ser-686 is modified to Phosphoserine.

The protein belongs to the peptidase S8 family. In terms of assembly, monomer. Can self-associate to form dimers and higher multimers which may have increased LDLR degrading activity. The precursor protein but not the mature protein may form multimers. Interacts with APOB, VLDLR, LRP8/APOER2 and BACE1. The full-length immature form (pro-PCSK9) interacts with SCNN1A, SCNN1B and SCNN1G. The pro-PCSK9 form (via C-terminal domain) interacts with LDLR. Interacts (via the C-terminal domain) with ANXA2 (via repeat Annexin 1); the interaction inhibits the degradation of LDLR. Ca(2+) serves as cofactor. In terms of processing, cleavage by furin and PCSK5 generates a truncated inactive protein that is unable to induce LDLR degradation. Post-translationally, undergoes autocatalytic cleavage in the endoplasmic reticulum to release the propeptide from the N-terminus and the cleavage of the propeptide is strictly required for its maturation and activation. The cleaved propeptide however remains associated with the catalytic domain through non-covalent interactions, preventing potential substrates from accessing its active site. As a result, it is secreted from cells as a propeptide-containing, enzymatically inactive protein. Phosphorylation protects the propeptide against proteolysis.

Its subcellular location is the cytoplasm. It localises to the secreted. The protein localises to the endosome. It is found in the lysosome. The protein resides in the cell surface. Its subcellular location is the endoplasmic reticulum. It localises to the golgi apparatus. Its activity is regulated as follows. Its proteolytic activity is autoinhibited by the non-covalent binding of the propeptide to the catalytic domain. Inhibited by EGTA. In terms of biological role, crucial player in the regulation of plasma cholesterol homeostasis. Binds to low-density lipid receptor family members: low density lipoprotein receptor (LDLR), very low density lipoprotein receptor (VLDLR), apolipoprotein E receptor (LRP1/APOER) and apolipoprotein receptor 2 (LRP8/APOER2), and promotes their degradation in intracellular acidic compartments. Acts via a non-proteolytic mechanism to enhance the degradation of the hepatic LDLR through a clathrin LDLRAP1/ARH-mediated pathway. May prevent the recycling of LDLR from endosomes to the cell surface or direct it to lysosomes for degradation. Can induce ubiquitination of LDLR leading to its subsequent degradation. Inhibits intracellular degradation of APOB via the autophagosome/lysosome pathway in a LDLR-independent manner. Involved in the disposal of non-acetylated intermediates of BACE1 in the early secretory pathway. Inhibits epithelial Na(+) channel (ENaC)-mediated Na(+) absorption by reducing ENaC surface expression primarily by increasing its proteasomal degradation. Regulates neuronal apoptosis via modulation of LRP8/APOER2 levels and related anti-apoptotic signaling pathways. The chain is Proprotein convertase subtilisin/kexin type 9 (PCSK9) from Gorilla gorilla gorilla (Western lowland gorilla).